The following is a 404-amino-acid chain: tRNA/tmRNA (uracil-C(5))-methyltransferase (404 aa).

5 residues coordinate S-adenosyl-L-methionine: glutamine 218, tyrosine 251, asparagine 256, glutamate 272, and aspartate 332. Cysteine 358 serves as the catalytic Nucleophile. The Proton acceptor role is filled by glutamate 392.

This sequence belongs to the class I-like SAM-binding methyltransferase superfamily. RNA M5U methyltransferase family. TrmA subfamily.

The enzyme catalyses uridine(54) in tRNA + S-adenosyl-L-methionine = 5-methyluridine(54) in tRNA + S-adenosyl-L-homocysteine + H(+). It catalyses the reaction uridine(341) in tmRNA + S-adenosyl-L-methionine = 5-methyluridine(341) in tmRNA + S-adenosyl-L-homocysteine + H(+). Dual-specificity methyltransferase that catalyzes the formation of 5-methyluridine at position 54 (m5U54) in all tRNAs, and that of position 341 (m5U341) in tmRNA (transfer-mRNA). The protein is tRNA/tmRNA (uracil-C(5))-methyltransferase of Helicobacter hepaticus (strain ATCC 51449 / 3B1).